The following is a 537-amino-acid chain: tRNA(His) guanylyltransferase 2 (537 aa).

Aspartate 307, glycine 308, and aspartate 354 together coordinate Mg(2+). GTP is bound by residues aspartate 307–histidine 312 and serine 353–aspartate 354.

The protein belongs to the tRNA(His) guanylyltransferase family. Mg(2+) serves as cofactor.

It is found in the nucleus. Its subcellular location is the nucleoplasm. The catalysed reaction is a 5'-end ribonucleotide-tRNA(His) + GTP + ATP + H2O = a 5'-end phospho-guanosine-ribonucleotide-tRNA(His) + AMP + 2 diphosphate + H(+). In terms of biological role, adds a GMP to the 5'-end of tRNA(His) after transcription and RNase P cleavage. The polypeptide is tRNA(His) guanylyltransferase 2 (THG2) (Arabidopsis thaliana (Mouse-ear cress)).